We begin with the raw amino-acid sequence, 492 residues long: Probable cytochrome P450 310a1 (492 aa).

Residue cysteine 428 participates in heme binding.

Belongs to the cytochrome P450 family. Heme is required as a cofactor.

It localises to the endoplasmic reticulum membrane. Its subcellular location is the microsome membrane. May be involved in the metabolism of insect hormones and in the breakdown of synthetic insecticides. In Drosophila melanogaster (Fruit fly), this protein is Probable cytochrome P450 310a1 (Cyp310a1).